A 338-amino-acid chain; its full sequence is uncharacterized protein (338 aa).

Residues 1 to 72 (MASPPILSRE…LNPVEDYDSK (72 aa)) form a disordered region. The span at 24–38 (GGNSEVNIDPSASSS) shows a compositional bias: polar residues. Over residues 49-58 (ADTKIDPHLL) the composition is skewed to basic and acidic residues. Positions 59 to 68 (EEDDLNPVED) are enriched in acidic residues.

The protein resides in the cytoplasm. It localises to the nucleus. This is an uncharacterized protein from Schizosaccharomyces pombe (strain 972 / ATCC 24843) (Fission yeast).